The primary structure comprises 244 residues: Ureidoacrylate amidohydrolase RutB (244 aa).

D38 acts as the Proton acceptor in catalysis. K147 is an active-site residue. The active-site Nucleophile is the C180.

The protein belongs to the isochorismatase family. RutB subfamily.

It catalyses the reaction (Z)-3-ureidoacrylate + H2O + H(+) = (Z)-3-aminoacrylate + NH4(+) + CO2. The catalysed reaction is (Z)-3-ureidoacrylate + H2O = (Z)-3-aminoacrylate + carbamate + H(+). It carries out the reaction (Z)-2-methylureidoacrylate + H2O + H(+) = (Z)-2-methylaminoacrylate + NH4(+) + CO2. Hydrolyzes ureidoacrylate to form aminoacrylate and carbamate. The carbamate hydrolyzes spontaneously, thereby releasing one of the nitrogen atoms of the pyrimidine ring as ammonia and one of its carbon atoms as CO2. In Escherichia coli O1:K1 / APEC, this protein is Ureidoacrylate amidohydrolase RutB.